The following is a 284-amino-acid chain: MNTPPETRPDRPIRSQYEDFMRHVDAHGVFKADRTGTGTKSVFGYQMRFDLNEGFPLVTTKKVHLKSIVQELLWFLTGSSDNNWLKERGVTIWDEWAREDGDLGPVYGVQWRSWPTPDGGHIDQISEVIKTLKTNPDSRRIIVSAWNVADLSKMALMPCHAFFQFYVAPATEAGGKGKLSCQLYQRSADIFLGVPFNIGSYALLTHMVAQQCDLDVGDFIWTGGDCHIYSNHAEQVALQLSRAPFPYPTLHIKRKPESIFDYQFDDFEFLDYQHHAAIKAPVAV.

Arg-34 provides a ligand contact to dUMP. (6R)-5,10-methylene-5,6,7,8-tetrahydrofolate is bound at residue His-64. Position 139-140 (139-140 (RR)) interacts with dUMP. Cys-159 acts as the Nucleophile in catalysis. DUMP is bound by residues 186 to 189 (RSAD), Asn-197, and 227 to 229 (HIY). Asp-189 provides a ligand contact to (6R)-5,10-methylene-5,6,7,8-tetrahydrofolate. Ala-283 lines the (6R)-5,10-methylene-5,6,7,8-tetrahydrofolate pocket.

The protein belongs to the thymidylate synthase family. Bacterial-type ThyA subfamily. Homodimer.

It is found in the cytoplasm. The catalysed reaction is dUMP + (6R)-5,10-methylene-5,6,7,8-tetrahydrofolate = 7,8-dihydrofolate + dTMP. Its pathway is pyrimidine metabolism; dTTP biosynthesis. In terms of biological role, catalyzes the reductive methylation of 2'-deoxyuridine-5'-monophosphate (dUMP) to 2'-deoxythymidine-5'-monophosphate (dTMP) while utilizing 5,10-methylenetetrahydrofolate (mTHF) as the methyl donor and reductant in the reaction, yielding dihydrofolate (DHF) as a by-product. This enzymatic reaction provides an intracellular de novo source of dTMP, an essential precursor for DNA biosynthesis. This Polaromonas sp. (strain JS666 / ATCC BAA-500) protein is Thymidylate synthase.